A 190-amino-acid polypeptide reads, in one-letter code: MPKPRNIAAVKQLTALFQESNAAVLTEYRGLSVAQLTQLRTALGPDTTYAVLKNTLTTIAAKEAGVTAFEGQLSGPSAIAFITGDPVEAAKGLRDFAKTNPQLIVKSGMLEGRAISAADVTALADLESREVLLSKVAGVLKATQSKAAALFQAPLSKTVRTVEALREKQAAGAPAEAAPVEAPAAETVDA.

The disordered stretch occupies residues 170-190 (AAGAPAEAAPVEAPAAETVDA).

This sequence belongs to the universal ribosomal protein uL10 family. In terms of assembly, part of the ribosomal stalk of the 50S ribosomal subunit. The N-terminus interacts with L11 and the large rRNA to form the base of the stalk. The C-terminus forms an elongated spine to which L12 dimers bind in a sequential fashion forming a multimeric L10(L12)X complex.

Forms part of the ribosomal stalk, playing a central role in the interaction of the ribosome with GTP-bound translation factors. In Kineococcus radiotolerans (strain ATCC BAA-149 / DSM 14245 / SRS30216), this protein is Large ribosomal subunit protein uL10.